A 304-amino-acid polypeptide reads, in one-letter code: Eukaryotic translation initiation factor 2 subunit alpha (304 aa).

One can recognise an S1 motif domain in the interval 17–88; the sequence is DDIVMVNVQQ…EKGYIDLSKR (72 aa). Ser52 is subject to Phosphoserine; by GCN2. The disordered stretch occupies residues 283–304; the sequence is LESKELDNRSDSEDDEDESDDE. The span at 284–293 shows a compositional bias: basic and acidic residues; the sequence is ESKELDNRSD. A phosphoserine mark is found at Ser292 and Ser294. Residues 294–304 are compositionally biased toward acidic residues; the sequence is SEDDEDESDDE.

It belongs to the eIF-2-alpha family. Eukaryotic translation initiation factor 2 eIF2 is a heterotrimeric complex composed of an alpha, a beta and a gamma subunit. The factors eIF-1, eIF-2, eIF-3, TIF5/eIF-5 and methionyl-tRNAi form a multifactor complex (MFC) that may bind to the 40S ribosome. Interacts with CDC123; the interaction is direct. Interacts with GCD1. Post-translationally, phosphorylated; phosphorylation on Ser-52 by the GCN2 protein kinase occurs in response to low amino acid, carbon, or purine availability. Phosphorylation inhibits the guanine nucleotide exchange factor activity of the eIF2B complex.

The protein resides in the cytoplasm. The protein localises to the cytosol. EIF-2 functions in the early steps of protein synthesis by forming a ternary complex with GTP and initiator tRNA. This complex binds to a 40S ribosomal subunit, followed by mRNA binding to form a 43S pre-initiation complex. Junction of the 60S ribosomal subunit to form the 80S initiation complex is preceded by hydrolysis of the GTP bound to eIF-2 and release of an eIF-2-GDP binary complex. In order for eIF-2 to recycle and catalyze another round of initiation, the GDP bound to eIF-2 must exchange with GTP by way of a reaction catalyzed by eIF2B. The sequence is that of Eukaryotic translation initiation factor 2 subunit alpha from Saccharomyces cerevisiae (strain ATCC 204508 / S288c) (Baker's yeast).